Reading from the N-terminus, the 402-residue chain is Speedy protein E2 (402 aa).

The tract at residues 1 to 89 (MDRTETRFRK…EEPEKELAPE (89 aa)) is disordered. Residues 16–39 (GKITTSRQPHPQNEQSPQRSTSGY) show a composition bias toward polar residues. Residues 76-89 (DESEEEPEKELAPE) are compositionally biased toward acidic residues.

This sequence belongs to the Speedy/Ringo family.

In Homo sapiens (Human), this protein is Speedy protein E2 (SPDYE2).